The sequence spans 426 residues: Serine--tRNA ligase (426 aa).

233 to 235 (TAE) lines the L-serine pocket. Position 264-266 (264-266 (RSE)) interacts with ATP. Residue E287 participates in L-serine binding. 351 to 354 (EISS) is an ATP binding site. S387 serves as a coordination point for L-serine.

It belongs to the class-II aminoacyl-tRNA synthetase family. Type-1 seryl-tRNA synthetase subfamily. In terms of assembly, homodimer. The tRNA molecule binds across the dimer.

It localises to the cytoplasm. The catalysed reaction is tRNA(Ser) + L-serine + ATP = L-seryl-tRNA(Ser) + AMP + diphosphate + H(+). It carries out the reaction tRNA(Sec) + L-serine + ATP = L-seryl-tRNA(Sec) + AMP + diphosphate + H(+). It participates in aminoacyl-tRNA biosynthesis; selenocysteinyl-tRNA(Sec) biosynthesis; L-seryl-tRNA(Sec) from L-serine and tRNA(Sec): step 1/1. Catalyzes the attachment of serine to tRNA(Ser). Is also able to aminoacylate tRNA(Sec) with serine, to form the misacylated tRNA L-seryl-tRNA(Sec), which will be further converted into selenocysteinyl-tRNA(Sec). This Pseudomonas aeruginosa (strain LESB58) protein is Serine--tRNA ligase.